A 393-amino-acid polypeptide reads, in one-letter code: Putative N(4)-(beta-N-acetylglucosaminyl)-L-asparaginase GM21137 (393 aa).

The first 23 residues, 1–23 (MRTHLRASLWVLCLASTAFSILA), serve as a signal peptide directing secretion. Disulfide bonds link Cys97/Cys102 and Cys196/Cys212. Catalysis depends on Thr243, which acts as the Nucleophile. Substrate-binding positions include 271–274 (RVGD) and 294–297 (TGDG). Cys354 and Cys381 form a disulfide bridge.

The protein belongs to the Ntn-hydrolase family. As to quaternary structure, heterotetramer of two alpha and two beta chains arranged as a dimer of alpha/beta heterodimers. Post-translationally, cleaved into an alpha and beta chain by autocatalysis; this activates the enzyme. The N-terminal residue of the beta subunit is responsible for the nucleophile hydrolase activity.

It catalyses the reaction N(4)-(beta-N-acetyl-D-glucosaminyl)-L-asparagine + H2O = N-acetyl-beta-D-glucosaminylamine + L-aspartate + H(+). In terms of biological role, cleaves the GlcNAc-Asn bond which joins oligosaccharides to the peptide of asparagine-linked glycoproteins. The protein is Putative N(4)-(beta-N-acetylglucosaminyl)-L-asparaginase GM21137 of Drosophila sechellia (Fruit fly).